A 528-amino-acid polypeptide reads, in one-letter code: Neuronal acetylcholine receptor subunit alpha-2 (528 aa).

An N-terminal signal peptide occupies residues 1-23 (MGWPCRSIIPLLVWCFVTLQAAT). Residues 24 to 239 (REQKQPHGFA…ITFYFVIRRL (216 aa)) lie on the Extracellular side of the membrane. 2 N-linked (GlcNAc...) asparagine glycosylation sites follow: N54 and N104. Cystine bridges form between C158/C172 and C222/C223. Transmembrane regions (helical) follow at residues 240-264 (PLFY…VFYL), 272-290 (ITLC…LLIT), and 306-327 (YLLF…VLNV). At 328–501 (HHRSPSTHTM…WKYVAMVIDR (174 aa)) the chain is on the cytoplasmic side. Over residues 390–410 (DDKWEEEEEEEEEEEEEEEEE) the composition is skewed to acidic residues. The tract at residues 390 to 427 (DDKWEEEEEEEEEEEEEEEEEKAYPSRVPSGGSQGTQC) is disordered. Residues 502-520 (IFLWMFIIVCLLGTVGLFL) form a helical membrane-spanning segment.

This sequence belongs to the ligand-gated ion channel (TC 1.A.9) family. Acetylcholine receptor (TC 1.A.9.1) subfamily. Alpha-2/CHRNA2 sub-subfamily. As to quaternary structure, neuronal AChR is composed of two different types of subunits: alpha and non-alpha (beta). CHRNA2/alpha-2 subunit can be combined to CHRNB2/beta-2 or CHRNB4/beta-4 to give rise to functional receptors. Both CHRNA2:CHRNB2 and CHRNA2:CHRNB4 nAChR complexes are heteropentamers with two subtypes: LS (low agonist sensitivity) with a (CHRNA2)3:(CHRNB2/4)2 and HS (high agonist sensitivity) with a (CHRNA2)2:(CHRNB2/4)3 stoichiometries; the subtypes differ in their subunit binding interfaces which are involved in ligand binding.

Its subcellular location is the synaptic cell membrane. The protein localises to the cell membrane. The enzyme catalyses Ca(2+)(in) = Ca(2+)(out). It carries out the reaction K(+)(in) = K(+)(out). It catalyses the reaction Na(+)(in) = Na(+)(out). Its function is as follows. Component of neuronal acetylcholine receptors (nAChRs) that function as pentameric, ligand-gated cation channels with high calcium permeability among other activities. nAChRs are excitatory neurotrasnmitter receptors formed by a collection of nAChR subunits known to mediate synaptic transmission in the nervous system and the neuromuscular junction. Each nAchR subunit confers differential attributes to channel properties, including activation, deactivation and desensitization kinetics, pH sensitivity, cation permeability, and binding to allosteric modulators. CHRNA2 forms heteropentameric neuronal acetylcholine receptors with CHRNB2 and CHRNB4 and plays a role in nicotine dependence. This is Neuronal acetylcholine receptor subunit alpha-2 (CHRNA2) from Gallus gallus (Chicken).